Reading from the N-terminus, the 172-residue chain is Large ribosomal subunit protein uL10 (172 aa).

Belongs to the universal ribosomal protein uL10 family. In terms of assembly, part of the ribosomal stalk of the 50S ribosomal subunit. The N-terminus interacts with L11 and the large rRNA to form the base of the stalk. The C-terminus forms an elongated spine to which L12 dimers bind in a sequential fashion forming a multimeric L10(L12)X complex.

Its function is as follows. Forms part of the ribosomal stalk, playing a central role in the interaction of the ribosome with GTP-bound translation factors. In Ruegeria pomeroyi (strain ATCC 700808 / DSM 15171 / DSS-3) (Silicibacter pomeroyi), this protein is Large ribosomal subunit protein uL10.